A 265-amino-acid chain; its full sequence is Undecaprenyl-diphosphatase (265 aa).

7 consecutive transmembrane segments (helical) span residues Ser-38–Trp-58, Leu-80–Glu-100, Pro-107–Ala-127, Ile-135–Gly-155, Ala-175–Tyr-195, Ala-213–Leu-233, and Phe-244–Ile-264.

Belongs to the UppP family.

The protein localises to the cell inner membrane. It carries out the reaction di-trans,octa-cis-undecaprenyl diphosphate + H2O = di-trans,octa-cis-undecaprenyl phosphate + phosphate + H(+). Its function is as follows. Catalyzes the dephosphorylation of undecaprenyl diphosphate (UPP). Confers resistance to bacitracin. In Rhizobium etli (strain ATCC 51251 / DSM 11541 / JCM 21823 / NBRC 15573 / CFN 42), this protein is Undecaprenyl-diphosphatase.